The sequence spans 558 residues: Dimethylaniline monooxygenase [N-oxide-forming] 4 (558 aa).

Residues 9–13 (GAGVS), Glu-32, and 40–41 (LW) contribute to the FAD site. NADP(+) contacts are provided by residues 60-61 (TN) and 195-198 (TGGD). The chain crosses the membrane as a helical span at residues 517 to 537 (AWGAPVLLASLLLICKSSLFL).

This sequence belongs to the FMO family. The cofactor is FAD. As to expression, liver.

The protein resides in the microsome membrane. It localises to the endoplasmic reticulum membrane. The catalysed reaction is N,N-dimethylaniline + NADPH + O2 + H(+) = N,N-dimethylaniline N-oxide + NADP(+) + H2O. In terms of biological role, this protein is involved in the oxidative metabolism of a variety of xenobiotics such as drugs and pesticides. The protein is Dimethylaniline monooxygenase [N-oxide-forming] 4 (FMO4) of Homo sapiens (Human).